We begin with the raw amino-acid sequence, 354 residues long: Uroporphyrinogen decarboxylase (354 aa).

Substrate-binding positions include 27–31 (RQAGR), aspartate 77, tyrosine 154, threonine 209, and histidine 327.

The protein belongs to the uroporphyrinogen decarboxylase family. In terms of assembly, homodimer.

The protein resides in the cytoplasm. The catalysed reaction is uroporphyrinogen III + 4 H(+) = coproporphyrinogen III + 4 CO2. It participates in porphyrin-containing compound metabolism; protoporphyrin-IX biosynthesis; coproporphyrinogen-III from 5-aminolevulinate: step 4/4. In terms of biological role, catalyzes the decarboxylation of four acetate groups of uroporphyrinogen-III to yield coproporphyrinogen-III. The chain is Uroporphyrinogen decarboxylase from Shigella flexneri serotype 5b (strain 8401).